The chain runs to 621 residues: Microbial serine proteinase (621 aa).

A signal peptide spans 1–24 (MRKTSLALAISALLSALPIASVQA). One can recognise a Peptidase S8 domain in the interval 68–440 (PRGGMAGNDL…FGLVDVNKTQ (373 aa)). The active-site Charge relay system is the Asp98. The disordered stretch occupies residues 114-133 (PGSKNVVTGGSDPTPTDPDR). Residues His137 and Ser354 each act as charge relay system in the active site. Residues 454-619 (AVALAKGKGN…GYSVLGHDAA (166 aa)) enclose the P/Homo B domain. Residues 457–485 (LAKGKGNGRSPSAPSRYVGSSPTRSSTQV) are disordered. The span at 465 to 485 (RSPSAPSRYVGSSPTRSSTQV) shows a compositional bias: polar residues.

The protein belongs to the peptidase S8 family.

In terms of biological role, agent of furonculosis. In Aeromonas salmonicida, this protein is Microbial serine proteinase (aspA).